The following is a 215-amino-acid chain: Phosphoribosylglycinamide formyltransferase (215 aa).

Residues Arg74, 99 to 102, and Asn116 contribute to the (6R)-10-formyltetrahydrofolate site; that span reads MRIL. Residue His118 is the Proton donor of the active site.

Belongs to the GART family.

The enzyme catalyses N(1)-(5-phospho-beta-D-ribosyl)glycinamide + (6R)-10-formyltetrahydrofolate = N(2)-formyl-N(1)-(5-phospho-beta-D-ribosyl)glycinamide + (6S)-5,6,7,8-tetrahydrofolate + H(+). It participates in purine metabolism; IMP biosynthesis via de novo pathway; N(2)-formyl-N(1)-(5-phospho-D-ribosyl)glycinamide from N(1)-(5-phospho-D-ribosyl)glycinamide (10-formyl THF route): step 1/1. Catalyzes the transfer of a formyl group from 10-formyltetrahydrofolate to 5-phospho-ribosyl-glycinamide (GAR), producing 5-phospho-ribosyl-N-formylglycinamide (FGAR) and tetrahydrofolate. The polypeptide is Phosphoribosylglycinamide formyltransferase (Mycobacterium tuberculosis (strain CDC 1551 / Oshkosh)).